We begin with the raw amino-acid sequence, 60 residues long: Ferredoxin (60 aa).

2 4Fe-4S ferredoxin-type domains span residues 2 to 29 (KVRV…LGDD) and 30 to 60 (GKAK…SVEE). [4Fe-4S] cluster is bound by residues cysteine 10, cysteine 13, and cysteine 16. Cysteine 20 and cysteine 43 form a disulfide bridge. Position 51 (cysteine 51) interacts with [4Fe-4S] cluster.

Monomer. Requires [4Fe-4S] cluster as cofactor.

Functionally, ferredoxins are iron-sulfur proteins that transfer electrons in a wide variety of metabolic reactions. This chain is Ferredoxin (fdx), found in Thermotoga maritima (strain ATCC 43589 / DSM 3109 / JCM 10099 / NBRC 100826 / MSB8).